The chain runs to 401 residues: Probable E3 ubiquitin-protein ligase RHC2A (401 aa).

The tract at residues 41–93 (TPSDSFTTTTTTQHRSPTRFPPPSSSSSTPSASMHADNSPTPTIVTRTRSNRS) is disordered. Over residues 76 to 93 (ADNSPTPTIVTRTRSNRS) the composition is skewed to polar residues. The RING-type; atypical zinc finger occupies 201-242 (CAVCKENFVLKSSAREMPCNHIYHPDCILPWLAIRNSCPVCR).

The catalysed reaction is S-ubiquitinyl-[E2 ubiquitin-conjugating enzyme]-L-cysteine + [acceptor protein]-L-lysine = [E2 ubiquitin-conjugating enzyme]-L-cysteine + N(6)-ubiquitinyl-[acceptor protein]-L-lysine.. Its pathway is protein modification; protein ubiquitination. Its function is as follows. Probable E3 ubiquitin-protein ligase that may possess E3 ubiquitin ligase activity in vitro. The chain is Probable E3 ubiquitin-protein ligase RHC2A from Arabidopsis thaliana (Mouse-ear cress).